The primary structure comprises 1163 residues: AF4/FMR2 family member 4 (1163 aa).

Over residues 1–19 (MNREDRNVLRMKERERRNQ) the composition is skewed to basic and acidic residues. 4 disordered regions span residues 1–48 (MNRE…EDKL), 76–312 (AIPK…ASGD), 324–904 (THSW…PRRT), and 1034–1073 (NSYN…SSGA). Residues 115–128 (PSTSQSQKRSSGLQ) are compositionally biased toward polar residues. Ser-120 carries the phosphoserine modification. 2 stretches are compositionally biased toward low complexity: residues 129–148 (SGHS…NSSG) and 177–194 (RSSS…NSSH). Residues 198-217 (HGNDHHSKEHQRSKSPRDPD) are compositionally biased toward basic and acidic residues. Phosphoserine is present on Ser-212. Composition is skewed to polar residues over residues 227–251 (PFSS…SMLQ), 273–285 (EHYS…NSMT), and 350–375 (KESQ…NGHQ). Phosphoserine occurs at positions 387, 388, 389, and 392. Residues 403 to 412 (PRSTPGSNSE) are compositionally biased toward polar residues. Basic and acidic residues predominate over residues 413 to 429 (PSHHNSEGADNSRDDSS). Residues 430 to 462 (SHSGSESSSGSDSESESSSSDSEANEPSQSASP) show a composition bias toward low complexity. Phosphoserine occurs at positions 487, 490, and 491. Polar residues-rich tracts occupy residues 488 to 501 (PASS…SSQG), 510 to 528 (GTGN…SSAT), and 549 to 560 (SPAQSDSTTQRR). Phosphoserine is present on Ser-549. Residues 568-586 (KKAEKAAAEEPRGGLKIES) show a composition bias toward basic and acidic residues. A Glycyl lysine isopeptide (Lys-Gly) (interchain with G-Cter in SUMO2) cross-link involves residue Lys-583. The segment covering 599–612 (SRHKAATKGSRKPN) has biased composition (basic residues). Positions 613–627 (IKKESKSSPRPTAEK) are enriched in basic and acidic residues. Ser-671 carries the post-translational modification Phosphoserine. Position 674 is a phosphothreonine (Thr-674). Ser-680, Ser-694, Ser-703, and Ser-706 each carry phosphoserine. Tyr-712 carries the post-translational modification Phosphotyrosine. 3 stretches are compositionally biased toward basic and acidic residues: residues 730–761 (PYKE…EKVS), 769–789 (KNED…DKNS), and 799–811 (ESSK…EKDL). Phosphoserine is present on Ser-814. Lys-822 carries the N6-acetyllysine modification. 5 positions are modified to phosphoserine: Ser-836, Ser-1043, Ser-1055, Ser-1058, and Ser-1062. Residues 836-862 (SQSSSLKSSSNSNKETSGSSKNSSSTS) are compositionally biased toward low complexity. The segment covering 1062–1073 (SPGNSGNYSSGA) has biased composition (low complexity).

The protein belongs to the AF4 family. Component of the super elongation complex (SEC), at least composed of EAF1, EAF2, CDK9, MLLT3/AF9, AFF (AFF1 or AFF4), the P-TEFb complex and ELL (ELL, ELL2 or ELL3). Interacts with ELL3; the interaction is direct. Interacts with ELL2; the interaction is direct and leads to stabilize ELL2 and prevent ELL2 ubiquitination and degradation. Post-translationally, dephosphorylated at Ser-549 by the PNUTS-PP1 complex, promoting RNA polymerase II transcription pause-release. As to expression, ubiquitously expressed. Strongly expressed in heart, placenta, skeletal muscle, pancreas and to a lower extent in brain.

Its subcellular location is the nucleus. The protein localises to the chromosome. Functionally, key component of the super elongation complex (SEC), a complex required to increase the catalytic rate of RNA polymerase II transcription by suppressing transient pausing by the polymerase at multiple sites along the DNA. In the SEC complex, AFF4 acts as a central scaffold that recruits other factors through direct interactions with ELL proteins (ELL, ELL2 or ELL3) and the P-TEFb complex. In case of infection by HIV-1 virus, the SEC complex is recruited by the viral Tat protein to stimulate viral gene expression. This is AF4/FMR2 family member 4 (AFF4) from Homo sapiens (Human).